The sequence spans 402 residues: Propionate kinase (402 aa).

ATP is bound by residues N11 and K18. Mg(2+) is bound at residue N11. Substrate is bound at residue R86. The Proton donor/acceptor role is filled by D143. ATP contacts are provided by residues H175, 203 to 207, 278 to 280, and 326 to 330; these read HLGNG, DLR, and GIGEN.

Belongs to the acetokinase family. TdcD subfamily. In terms of assembly, homodimer. It depends on Mg(2+) as a cofactor.

The enzyme catalyses propanoate + ATP = propanoyl phosphate + ADP. It participates in amino-acid degradation; L-threonine degradation via propanoate pathway; propanoate from L-threonine: step 4/4. In terms of biological role, catalyzes the conversion of propionyl phosphate and ADP to propionate and ATP. This Edwardsiella piscicida protein is Propionate kinase.